We begin with the raw amino-acid sequence, 232 residues long: Sugar fermentation stimulation protein homolog (232 aa).

Belongs to the SfsA family.

The protein is Sugar fermentation stimulation protein homolog of Geobacter metallireducens (strain ATCC 53774 / DSM 7210 / GS-15).